The following is a 432-amino-acid chain: Adenylosuccinate synthetase (432 aa).

GTP-binding positions include 13 to 19 (GDEGKGK) and 41 to 43 (GHT). The active-site Proton acceptor is D14. Mg(2+) is bound by residues D14 and G41. Residues 14–17 (DEGK), 39–42 (NAGH), T131, R145, Q226, T241, and R305 contribute to the IMP site. Residue H42 is the Proton donor of the active site. 301 to 307 (SVTGRAR) serves as a coordination point for substrate. Residues R307, 333–335 (KLD), and 416–418 (STG) contribute to the GTP site.

This sequence belongs to the adenylosuccinate synthetase family. As to quaternary structure, homodimer. It depends on Mg(2+) as a cofactor.

The protein resides in the cytoplasm. It carries out the reaction IMP + L-aspartate + GTP = N(6)-(1,2-dicarboxyethyl)-AMP + GDP + phosphate + 2 H(+). It participates in purine metabolism; AMP biosynthesis via de novo pathway; AMP from IMP: step 1/2. Plays an important role in the de novo pathway of purine nucleotide biosynthesis. Catalyzes the first committed step in the biosynthesis of AMP from IMP. The chain is Adenylosuccinate synthetase from Neisseria meningitidis serogroup C (strain 053442).